A 342-amino-acid polypeptide reads, in one-letter code: Cytosolic Fe-S cluster assembly factor NBP35 (342 aa).

[4Fe-4S] cluster is bound by residues C33, C47, C50, and C56. ATP is bound at residue 86 to 93 (GKGGVGKS). C259 and C262 together coordinate [4Fe-4S] cluster.

The protein belongs to the Mrp/NBP35 ATP-binding proteins family. NUBP1/NBP35 subfamily. In terms of assembly, heterotetramer of 2 NBP35 and 2 CFD1 chains. It depends on [4Fe-4S] cluster as a cofactor.

Its subcellular location is the cytoplasm. Component of the cytosolic iron-sulfur (Fe/S) protein assembly (CIA) machinery. Required for maturation of extramitochondrial Fe-S proteins. The NBP35-CFD1 heterotetramer forms a Fe-S scaffold complex, mediating the de novo assembly of an Fe-S cluster and its transfer to target apoproteins. This is Cytosolic Fe-S cluster assembly factor NBP35 from Gibberella zeae (strain ATCC MYA-4620 / CBS 123657 / FGSC 9075 / NRRL 31084 / PH-1) (Wheat head blight fungus).